A 348-amino-acid chain; its full sequence is 4-hydroxy-2-oxovalerate aldolase 3 (348 aa).

The region spanning 8–260 (ITVHDMTLRD…ETGVDVWKIQ (253 aa)) is the Pyruvate carboxyltransferase domain. 16 to 17 (RD) is a binding site for substrate. Residue Asp17 coordinates Mn(2+). The active-site Proton acceptor is the His20. Substrate contacts are provided by Ser170 and His199. Mn(2+) contacts are provided by His199 and His201. Tyr290 lines the substrate pocket.

Belongs to the 4-hydroxy-2-oxovalerate aldolase family.

The enzyme catalyses (S)-4-hydroxy-2-oxopentanoate = acetaldehyde + pyruvate. The protein is 4-hydroxy-2-oxovalerate aldolase 3 of Burkholderia lata (strain ATCC 17760 / DSM 23089 / LMG 22485 / NCIMB 9086 / R18194 / 383).